A 430-amino-acid chain; its full sequence is UDP-N-acetylglucosamine 1-carboxyvinyltransferase (430 aa).

Phosphoenolpyruvate is bound at residue 22-23 (KN). Arg102 is a binding site for UDP-N-acetyl-alpha-D-glucosamine. Cys126 functions as the Proton donor in the catalytic mechanism. Cys126 is subject to 2-(S-cysteinyl)pyruvic acid O-phosphothioketal. UDP-N-acetyl-alpha-D-glucosamine is bound by residues 131–135 (RPVDL), 172–175 (KVSV), Asp317, and Ile339.

This sequence belongs to the EPSP synthase family. MurA subfamily.

The protein resides in the cytoplasm. It carries out the reaction phosphoenolpyruvate + UDP-N-acetyl-alpha-D-glucosamine = UDP-N-acetyl-3-O-(1-carboxyvinyl)-alpha-D-glucosamine + phosphate. It participates in cell wall biogenesis; peptidoglycan biosynthesis. Functionally, cell wall formation. Adds enolpyruvyl to UDP-N-acetylglucosamine. In Rhizobium etli (strain ATCC 51251 / DSM 11541 / JCM 21823 / NBRC 15573 / CFN 42), this protein is UDP-N-acetylglucosamine 1-carboxyvinyltransferase.